The sequence spans 163 residues: MGELADPVVIGTITAPHGVRGTVRVRPAGEGRHLREGLSPLVGGRRRRILRARRTPKGFLVDLEGVPDRFRAAELRGEDLLLDRSELDAPEEDEFYVADLVGLEAVDERGGALGEVIETFPTPAHEVLVVRGEGGLLYVPFTREHVPEVDPRAGRAVVRPPEE.

The PRC barrel domain occupies 92–162 (EDEFYVADLV…AGRAVVRPPE (71 aa)).

The protein belongs to the RimM family. In terms of assembly, binds ribosomal protein uS19.

It is found in the cytoplasm. Functionally, an accessory protein needed during the final step in the assembly of 30S ribosomal subunit, possibly for assembly of the head region. Essential for efficient processing of 16S rRNA. May be needed both before and after RbfA during the maturation of 16S rRNA. It has affinity for free ribosomal 30S subunits but not for 70S ribosomes. The sequence is that of Ribosome maturation factor RimM from Rubrobacter xylanophilus (strain DSM 9941 / JCM 11954 / NBRC 16129 / PRD-1).